Consider the following 304-residue polypeptide: tRNA dimethylallyltransferase (304 aa).

2-9 (GPTASGKT) provides a ligand contact to ATP. 4 to 9 (TASGKT) is a binding site for substrate. Positions 28-31 (DSAL) are interaction with substrate tRNA.

It belongs to the IPP transferase family. Monomer. Requires Mg(2+) as cofactor.

It carries out the reaction adenosine(37) in tRNA + dimethylallyl diphosphate = N(6)-dimethylallyladenosine(37) in tRNA + diphosphate. In terms of biological role, catalyzes the transfer of a dimethylallyl group onto the adenine at position 37 in tRNAs that read codons beginning with uridine, leading to the formation of N6-(dimethylallyl)adenosine (i(6)A). This is tRNA dimethylallyltransferase from Blochmanniella pennsylvanica (strain BPEN).